A 1735-amino-acid polypeptide reads, in one-letter code: Inactive tyrosine-protein kinase PEAK1 (1735 aa).

2 disordered regions span residues 26 to 66 (LHQL…PPVA) and 111 to 145 (LSQK…KISN). 2 stretches are compositionally biased toward polar residues: residues 111–121 (LSQKPLNNNSE) and 130–145 (DPQQ…KISN). Position 282 is a phosphoserine (Ser282). Disordered regions lie at residues 324–410 (NSGV…SVKV), 491–514 (GRPK…LTPG), and 537–580 (SPRQ…SKTI). The segment covering 325–336 (SGVSYGQGSVQS) has biased composition (low complexity). A compositionally biased stretch (polar residues) spans 337 to 365 (TISSDCTSPGSSFTEESRSETASSLSQKV). Residues 367–378 (NGGISPGNPGNS) are compositionally biased toward low complexity. The segment covering 384-393 (TESNFESPPG) has biased composition (polar residues). Positions 498–509 (SSSTPNSPVTSP) are enriched in low complexity. Phosphoserine occurs at positions 537, 569, and 584. Residues 566–580 (APTSPTATNISSKTI) are compositionally biased toward polar residues. 2 positions are modified to phosphotyrosine: Tyr632 and Tyr638. Ser645 is subject to Phosphoserine. Tyr662 is subject to Phosphotyrosine. 3 disordered regions span residues 663-762 (EEIE…REKA), 800-919 (PDAD…AADA), and 1019-1097 (RNSE…SATY). Polar residues-rich tracts occupy residues 704 to 735 (QEFN…QRPT), 745 to 757 (AQGS…SSNS), and 819 to 839 (LFTS…SPTA). Phosphoserine is present on residues Ser824 and Ser825. Over residues 847 to 863 (TKPVTSPPSKLVTSAQS) the composition is skewed to low complexity. A compositionally biased stretch (pro residues) spans 864-873 (EPPPPFPPPR). The span at 879–901 (YHASNLLQRHFTNWTKPTSPTRS) shows a compositional bias: polar residues. The residue at position 897 (Ser897) is a Phosphoserine. 2 stretches are compositionally biased toward basic and acidic residues: residues 902 to 919 (TEAE…AADA) and 1037 to 1055 (ACSR…RDPR). The span at 1076–1086 (EREEEKDDTLD) shows a compositional bias: acidic residues. Residue Thr1141 is modified to Phosphothreonine. Tyr1177 carries the phosphotyrosine modification. A required for homodimerization region spans residues 1274–1300 (EVVGKLRSLHTDALKRLAVKCEDLFMA). A Protein kinase domain is found at 1302–1664 (QKDQLRFGVD…LLWGPREDLF (363 aa)). Phosphoserine is present on Ser1363. The tract at residues 1394–1445 (WEDPDAPEKAEDGTEDSEEEGKAETLGGNPEPCSETEPSQKENQRVTNRKQR) is disordered. The tract at residues 1659 to 1732 (PREDLFQIFT…DSLSYIVKIL (74 aa)) is required for homodimerization.

It belongs to the protein kinase superfamily. As to quaternary structure, homodimer. Interacts with BCAR1 and CRK. Interacts with PRAG1. Interacts (when phosphorylated at Tyr-1177) with SHC1 (via PID domain). Found in a complex with PPP1CA, PPP1CC and SHC1. Interacts (when phosphorylated at Tyr-632) with tensin TNS3 (when phosphorylated on the SH2 domain); TNS3 also interacts with integrins ITGB1, ITGB3 and ITGB5 and mediates their association with PEAK1. Phosphorylated on tyrosine in a CSK-dependent manner in response to adhesion to fibronectin and to EGF stimulation. Phosphorylation at Tyr-662 by a Src family kinase controls subcellular localization to focal adhesion and focal adhesion dynamics. Phosphorylation at Tyr-1177 is essential for binding to SHC1. Phosphorylation at Tyr-632 promotes interaction with tensin TNS3.

Its subcellular location is the cytoplasm. It is found in the cytoskeleton. The protein resides in the cell junction. The protein localises to the focal adhesion. Its function is as follows. Probable catalytically inactive kinase. Scaffolding protein that regulates the cytoskeleton to control cell spreading and migration by modulating focal adhesion dynamics. Acts as a scaffold for mediating EGFR signaling. The protein is Inactive tyrosine-protein kinase PEAK1 (Peak1) of Mus musculus (Mouse).